A 641-amino-acid chain; its full sequence is Chaperone protein HtpG (641 aa).

Residues 1 to 348 (MTTATEKQTL…SNDLSLNVSR (348 aa)) are a; substrate-binding. The tract at residues 349–565 (EILQNDKAVE…AYDMGVQMRR (217 aa)) is b. The interval 566 to 641 (IMEAAGQALP…KLLLELSNAG (76 aa)) is c.

Belongs to the heat shock protein 90 family. In terms of assembly, homodimer.

The protein localises to the cytoplasm. Its function is as follows. Molecular chaperone. Has ATPase activity. The polypeptide is Chaperone protein HtpG (Hahella chejuensis (strain KCTC 2396)).